The sequence spans 278 residues: S-formylglutathione hydrolase YeiG (278 aa).

Residues serine 145, aspartate 223, and histidine 256 each act as charge relay system in the active site.

This sequence belongs to the esterase D family.

The enzyme catalyses S-formylglutathione + H2O = formate + glutathione + H(+). Serine hydrolase involved in the detoxification of formaldehyde. Hydrolyzes S-formylglutathione to glutathione and formate. The sequence is that of S-formylglutathione hydrolase YeiG (yeiG) from Escherichia coli (strain SMS-3-5 / SECEC).